A 132-amino-acid chain; its full sequence is Small ribosomal subunit protein uS8 (132 aa).

This sequence belongs to the universal ribosomal protein uS8 family. In terms of assembly, part of the 30S ribosomal subunit. Contacts proteins S5 and S12.

In terms of biological role, one of the primary rRNA binding proteins, it binds directly to 16S rRNA central domain where it helps coordinate assembly of the platform of the 30S subunit. The polypeptide is Small ribosomal subunit protein uS8 (Corynebacterium diphtheriae (strain ATCC 700971 / NCTC 13129 / Biotype gravis)).